Consider the following 115-residue polypeptide: HTH-type transcriptional regulator SarR (115 aa).

The H-T-H motif DNA-binding region spans 51 to 74 (SKEIAKCSEFKPYYLTKALQKLKD).

It belongs to the SarA family. As to quaternary structure, homodimer.

Its subcellular location is the cytoplasm. Negative regulator of sarA transcription at late exponential and stationary growth phases. It contributes to the modulation of target genes downstream of the sarA regulatory cascade. Also, positively regulates expression of primary transcripts RNAII and RNAIII generated by agr (virulence accessory gene regulator) locus. This Staphylococcus aureus (strain NCTC 8325 / PS 47) protein is HTH-type transcriptional regulator SarR (sarR).